Consider the following 229-residue polypeptide: Uracil-DNA glycosylase (229 aa).

The active-site Proton acceptor is D64.

This sequence belongs to the uracil-DNA glycosylase (UDG) superfamily. UNG family. In terms of assembly, monomer.

It localises to the cytoplasm. It catalyses the reaction Hydrolyzes single-stranded DNA or mismatched double-stranded DNA and polynucleotides, releasing free uracil.. Functionally, excises uracil residues from the DNA which can arise as a result of misincorporation of dUMP residues by DNA polymerase or due to deamination of cytosine. This chain is Uracil-DNA glycosylase, found in Escherichia coli O157:H7.